We begin with the raw amino-acid sequence, 32 residues long: Dermatoxin-J2 (32 aa).

Glutamine amide is present on Gln32.

In terms of tissue distribution, expressed by the skin glands.

It localises to the secreted. Its function is as follows. Antimicrobial peptide. The polypeptide is Dermatoxin-J2 (Phasmahyla jandaia (Jandaia leaf frog)).